The following is a 64-amino-acid chain: Large ribosomal subunit protein bL35 (64 aa).

Positions 19-44 (TGKLKASRPGRRHKLTGKTPKRKRQL) are disordered. Basic residues predominate over residues 23 to 44 (KASRPGRRHKLTGKTPKRKRQL).

Belongs to the bacterial ribosomal protein bL35 family.

This is Large ribosomal subunit protein bL35 from Protochlamydia amoebophila (strain UWE25).